A 436-amino-acid chain; its full sequence is GTPase Der (436 aa).

EngA-type G domains follow at residues 4–167 and 175–351; these read PTVA…PVEE and IRFS…ESQN. Residues 10–17, 57–61, 119–122, 181–188, 229–233, and 294–297 each bind GTP; these read GRPNVGKS, DTGGI, NKVD, DTAGM, and NKWD. Residues 352–436 enclose the KH-like domain; that stretch reads KRIPSAVLND…PINLIARKRK (85 aa).

This sequence belongs to the TRAFAC class TrmE-Era-EngA-EngB-Septin-like GTPase superfamily. EngA (Der) GTPase family. Associates with the 50S ribosomal subunit.

Its function is as follows. GTPase that plays an essential role in the late steps of ribosome biogenesis. The chain is GTPase Der from Streptococcus agalactiae serotype Ia (strain ATCC 27591 / A909 / CDC SS700).